Consider the following 507-residue polypeptide: MSMRTPEELSNLIKGLIEEYTPEVKMVDFGIVFQVGDGIARIYGLDRVMSGELLEFEDGTLGIALNLEANNVGAVLLGDGLKITEGSRVRCTGKIAEIPVGENYLGRVVDALARPVDGKGAISTNDTRAIESPAPGIVSRRSVYEPLQTGLVAVDAMIPIGRGQRELIIGDRQTGKTAIAVDTILNQKGKGVICVYVAIGQKASSVAQVLNSLKERGALDYTIIVMANANEPSTLQYLAPYTGATLAEYFMYTGRPTLTIYDDLSKQAQAYREMSLLLRRPPGREAYPGDVFYLHSRLLERAAKLSDALGEGSMTALPVVETQEGDVSAYIPTNVISITDGQIFLSGDLFNAGIRPAINVGISVSRVGSAAQIKAMKQVAGTLKLSLAQFAELEAFSQFASDLDAATQKQLARGSRLREILKQPQNSPLSVEEQVASIYTGTNGYLDSLEVLDVRPFLSGLRTYLTNNVPQYGEIVRKTNTFTPEAESLLKKAITDFLAEFGATKSN.

Gly-170–Thr-177 lines the ATP pocket.

Belongs to the ATPase alpha/beta chains family. F-type ATPases have 2 components, CF(1) - the catalytic core - and CF(0) - the membrane proton channel. CF(1) has five subunits: alpha(3), beta(3), gamma(1), delta(1), epsilon(1). CF(0) has four main subunits: a, b, b' and c.

The protein resides in the plastid. It localises to the chloroplast thylakoid membrane. The catalysed reaction is ATP + H2O + 4 H(+)(in) = ADP + phosphate + 5 H(+)(out). Its function is as follows. Produces ATP from ADP in the presence of a proton gradient across the membrane. The alpha chain is a regulatory subunit. This Tetradesmus obliquus (Green alga) protein is ATP synthase subunit alpha, chloroplastic.